The chain runs to 160 residues: Small ribosomal subunit protein uS9 (160 aa).

Positions 1 to 18 are enriched in polar residues; the sequence is MTDTSNSLQDLGTLTGAP. The tract at residues 1–37 is disordered; it reads MTDTSNSLQDLGTLTGAPSAQPVKSVEPKIDAQGRAY.

It belongs to the universal ribosomal protein uS9 family.

The protein is Small ribosomal subunit protein uS9 of Hyphomonas neptunium (strain ATCC 15444).